Here is a 170-residue protein sequence, read N- to C-terminus: Group 2 truncated hemoglobin 3-1 (170 aa).

Residue histidine 98 participates in heme b binding.

It belongs to the truncated hemoglobin family. Group II subfamily. As to quaternary structure, homodimer when ferric.

Functionally, hemoglobin-like protein that exhibits an unusual concentration-independent binding of O(2) and CO. Required for general plant development and during nodulation. May promote shoot organogenesis from root explants. The chain is Group 2 truncated hemoglobin 3-1 from Medicago truncatula (Barrel medic).